Reading from the N-terminus, the 968-residue chain is Phosphatidylserine decarboxylase 2 proenzyme (968 aa).

The N-terminal stretch at 1 to 25 (MAKVMRLIIFVCVALVAISVPAASS) is a signal peptide. Catalysis depends on charge relay system; for autoendoproteolytic cleavage activity residues Asp-500, His-570, and Ser-683. Ser-683 acts as the Schiff-base intermediate with substrate; via pyruvic acid; for decarboxylase activity in catalysis. Residue Ser-683 is modified to Pyruvic acid (Ser); by autocatalysis.

Belongs to the phosphatidylserine decarboxylase family. In terms of assembly, heterodimer of a large membrane-associated beta subunit and a small pyruvoyl-containing alpha subunit. Pyruvate is required as a cofactor. Is synthesized initially as an inactive proenzyme. Formation of the active enzyme involves a self-maturation process in which the active site pyruvoyl group is generated from an internal serine residue via an autocatalytic post-translational modification. Two non-identical subunits are generated from the proenzyme in this reaction, and the pyruvate is formed at the N-terminus of the alpha chain, which is derived from the carboxyl end of the proenzyme. The autoendoproteolytic cleavage occurs by a canonical serine protease mechanism, in which the side chain hydroxyl group of the serine supplies its oxygen atom to form the C-terminus of the beta chain, while the remainder of the serine residue undergoes an oxidative deamination to produce ammonia and the pyruvoyl prosthetic group on the alpha chain. During this reaction, the Ser that is part of the protease active site of the proenzyme becomes the pyruvoyl prosthetic group, which constitutes an essential element of the active site of the mature decarboxylase.

It is found in the parasitophorous vacuole. The protein resides in the cytoplasmic vesicle. The protein localises to the secretory vesicle. The catalysed reaction is a 1,2-diacyl-sn-glycero-3-phospho-L-serine + H(+) = a 1,2-diacyl-sn-glycero-3-phosphoethanolamine + CO2. Its pathway is phospholipid metabolism; phosphatidylethanolamine biosynthesis; phosphatidylethanolamine from CDP-diacylglycerol: step 2/2. Functionally, catalyzes the formation of phosphatidylethanolamine (PtdEtn) from phosphatidylserine (PtdSer). Plays a central role in phospholipid metabolism and in the interorganelle trafficking of phosphatidylserine. Can act on liposomal and host cell PtdSer. The chain is Phosphatidylserine decarboxylase 2 proenzyme from Toxoplasma gondii (strain ATCC 50853 / GT1).